A 220-amino-acid polypeptide reads, in one-letter code: Thiopurine S-methyltransferase (220 aa).

The S-adenosyl-L-methionine site is built by Trp10, Leu45, Glu66, and Arg123.

This sequence belongs to the class I-like SAM-binding methyltransferase superfamily. TPMT family.

The protein localises to the cytoplasm. The enzyme catalyses S-adenosyl-L-methionine + a thiopurine = S-adenosyl-L-homocysteine + a thiopurine S-methylether.. The protein is Thiopurine S-methyltransferase of Nitrosomonas eutropha (strain DSM 101675 / C91 / Nm57).